We begin with the raw amino-acid sequence, 468 residues long: UDP-N-acetylmuramate--L-alanine ligase (468 aa).

An ATP-binding site is contributed by 112-118 (GTHGKTT).

This sequence belongs to the MurCDEF family.

It is found in the cytoplasm. The catalysed reaction is UDP-N-acetyl-alpha-D-muramate + L-alanine + ATP = UDP-N-acetyl-alpha-D-muramoyl-L-alanine + ADP + phosphate + H(+). The protein operates within cell wall biogenesis; peptidoglycan biosynthesis. Functionally, cell wall formation. The protein is UDP-N-acetylmuramate--L-alanine ligase of Neisseria meningitidis serogroup C (strain 053442).